The sequence spans 62 residues: MDEKLSRVDPKLLELLVCPLSKGRLSYDREHNELVSEKARLAYPIRDGIPIMLVSEARRLDE.

Belongs to the UPF0434 family.

The protein is UPF0434 protein RHECIAT_CH0004260 of Rhizobium etli (strain CIAT 652).